Consider the following 607-residue polypeptide: Fucose-1-phosphate guanylyltransferase (607 aa).

Positions methionine 1–proline 21 are disordered.

Expressed in many tissues.

It localises to the cytoplasm. It carries out the reaction beta-L-fucose 1-phosphate + GTP + H(+) = GDP-beta-L-fucose + diphosphate. Catalyzes the formation of GDP-L-fucose from GTP and L-fucose-1-phosphate. Functions as a salvage pathway to reutilize L-fucose arising from the turnover of glycoproteins and glycolipids. The chain is Fucose-1-phosphate guanylyltransferase from Homo sapiens (Human).